Consider the following 405-residue polypeptide: Coenzyme F420 hydrogenase subunit alpha (405 aa).

Ni(2+) contacts are provided by C63, C66, C380, and C383.

Belongs to the [NiFe]/[NiFeSe] hydrogenase large subunit family. In terms of assembly, heterocomplex of the form (alpha(1)beta(1)gamma(1))(8). Ni(2+) serves as cofactor. Iron-sulfur cluster is required as a cofactor. The cofactor is FAD.

The catalysed reaction is oxidized coenzyme F420-(gamma-L-Glu)(n) + H2 + H(+) = reduced coenzyme F420-(gamma-L-Glu)(n). Reduces the physiological low-potential two-electron acceptor coenzyme F420, and the artificial one-electron acceptor methylviologen. The polypeptide is Coenzyme F420 hydrogenase subunit alpha (frhA) (Methanothermobacter thermautotrophicus (strain ATCC 29096 / DSM 1053 / JCM 10044 / NBRC 100330 / Delta H) (Methanobacterium thermoautotrophicum)).